A 253-amino-acid polypeptide reads, in one-letter code: Vitamin B12 import ATP-binding protein BtuD (253 aa).

Residues 1–236 (MTNQLMALNQ…NTLSRVFAAD (236 aa)) form the ABC transporter domain. 34–41 (GPNGSGKS) contributes to the ATP binding site.

This sequence belongs to the ABC transporter superfamily. Vitamin B12 importer (TC 3.A.1.13.1) family. The complex is composed of two ATP-binding proteins (BtuD), two transmembrane proteins (BtuC) and a solute-binding protein (BtuF).

The protein localises to the cell inner membrane. The catalysed reaction is an R-cob(III)alamin(out) + ATP + H2O = an R-cob(III)alamin(in) + ADP + phosphate + H(+). Its function is as follows. Part of the ABC transporter complex BtuCDF involved in vitamin B12 import. Responsible for energy coupling to the transport system. The protein is Vitamin B12 import ATP-binding protein BtuD of Photorhabdus laumondii subsp. laumondii (strain DSM 15139 / CIP 105565 / TT01) (Photorhabdus luminescens subsp. laumondii).